Reading from the N-terminus, the 46-residue chain is GPSFCKANGKPCSYHADCCNCCLSGICAPSTNWILPGCSTSSFFKI.

4-hydroxyproline is present on residues P2 and P11. Intrachain disulfides connect C5–C19, C12–C22, C18–C27, and C21–C38. P29 carries the post-translational modification 4-hydroxyproline. F44 carries the D-phenylalanine modification.

Belongs to the conotoxin I1 superfamily. As to expression, expressed by the venom duct.

Its subcellular location is the secreted. Functionally, iota-conotoxins bind to voltage-gated sodium channels (Nav) and act as agonists by shifting the voltage-dependence of activation to more hyperpolarized levels. Produces general excitatory symptoms. This is Iota-conotoxin-like R11.17 from Conus radiatus (Rayed cone).